A 354-amino-acid chain; its full sequence is MTIKLAIDCMGGDHGVAVTIPAAIQFLAAHEDVEMLLVGQPDVIAAELKRLHATAHSRIHVVAASEVVSMDDPVEVALRKKKDSSMRVAIKQVKDGAAQACVSAGNTGALMAVSRYVLKTLDGIDRPAIATAIPNEKGAGTTVLDLGANADCEPAHLLQFAQMASAMVSVVEHKPRPTVGLLNIGEEVIKGNEVVKQAGELLRASDLNFFGNVEGNDIFKGTTDIVVCDGFVGNVALKSTEGLAKMIGAMLREEFSRSWFTKLLAIVALPVLTRFKRRVDHRRYNGAALLGLRGLVIKSHGSADAYAFEWAIKRAYDAAANGVIARIAQAFESHHDPAGAAVPLSTSAPAADAA.

It belongs to the PlsX family. As to quaternary structure, homodimer. Probably interacts with PlsY.

The protein localises to the cytoplasm. It carries out the reaction a fatty acyl-[ACP] + phosphate = an acyl phosphate + holo-[ACP]. Its pathway is lipid metabolism; phospholipid metabolism. Functionally, catalyzes the reversible formation of acyl-phosphate (acyl-PO(4)) from acyl-[acyl-carrier-protein] (acyl-ACP). This enzyme utilizes acyl-ACP as fatty acyl donor, but not acyl-CoA. The chain is Phosphate acyltransferase from Ralstonia nicotianae (strain ATCC BAA-1114 / GMI1000) (Ralstonia solanacearum).